A 623-amino-acid polypeptide reads, in one-letter code: Phosphomethylpyrimidine synthase (623 aa).

Substrate-binding positions include Asn221, Met250, Tyr279, His315, 335–337 (SRG), 376–379 (DGLR), and Glu415. His419 contacts Zn(2+). Tyr442 serves as a coordination point for substrate. A Zn(2+)-binding site is contributed by His483. Positions 563, 566, and 571 each coordinate [4Fe-4S] cluster.

The protein belongs to the ThiC family. Homodimer. [4Fe-4S] cluster serves as cofactor.

The enzyme catalyses 5-amino-1-(5-phospho-beta-D-ribosyl)imidazole + S-adenosyl-L-methionine = 4-amino-2-methyl-5-(phosphooxymethyl)pyrimidine + CO + 5'-deoxyadenosine + formate + L-methionine + 3 H(+). It participates in cofactor biosynthesis; thiamine diphosphate biosynthesis. Catalyzes the synthesis of the hydroxymethylpyrimidine phosphate (HMP-P) moiety of thiamine from aminoimidazole ribotide (AIR) in a radical S-adenosyl-L-methionine (SAM)-dependent reaction. The sequence is that of Phosphomethylpyrimidine synthase from Parvibaculum lavamentivorans (strain DS-1 / DSM 13023 / NCIMB 13966).